Reading from the N-terminus, the 680-residue chain is Calcium-binding and coiled-coil domain-containing protein 1 (680 aa).

Residues 1–30 (MEESSLSRAPSRGGVNFLNVARTYIPNTKV) form a p300 KIX-binding region. Residues 1 to 190 (MEESSLSRAP…VQELEKALAA (190 aa)) are N-terminal AD (CTNNB1 binding site). S4 is modified (phosphoserine). The segment at 45-125 (SDWIGIFKVE…FQFREPRPMD (81 aa)) is interaction with GATA1. 3 coiled-coil regions span residues 145 to 205 (KATV…YKGL), 232 to 339 (ELEE…AELE), and 417 to 514 (QSVE…ADEK). The C-terminal AD (CTNNB1 binding site); interaction with CCAR1 stretch occupies residues 501-680 (RKLEARLEKV…HTYTHTHTHA (180 aa)). Residues 511–606 (ADEKWSEDPA…DSEAEDEKSV (96 aa)) form a disordered region. The UBZ1-type zinc-finger motif lies at 654 to 679 (WKECPICKERFPVHTQTHTYTHTHTH). C657, C660, H675, and H679 together coordinate Zn(2+).

Belongs to the CALCOCO family. Part of a calphoglin complex consisting of CALCOCO1, PPA1 and PGM. Interacts with the bHLH-PAS domains of GRIP1, AHR and ARNT. Interacts with CTNNB1 via both its N- and C-terminal regions. Interacts with EP300. Interacts with CCAR1 (via N-terminus) and GATA1.

It is found in the cytoplasm. It localises to the nucleus. Functions as a coactivator for aryl hydrocarbon and nuclear receptors (NR). Recruited to promoters through its contact with the N-terminal basic helix-loop-helix-Per-Arnt-Sim (PAS) domain of transcription factors or coactivators, such as NCOA2. During ER-activation acts synergistically in combination with other NCOA2-binding proteins, such as EP300, CREBBP and CARM1. Involved in the transcriptional activation of target genes in the Wnt/CTNNB1 pathway. Functions as a secondary coactivator in LEF1-mediated transcriptional activation via its interaction with CTNNB1. Coactivator function for nuclear receptors and LEF1/CTNNB1 involves differential utilization of two different activation regions. In association with CCAR1 enhances GATA1- and MED1-mediated transcriptional activation from the gamma-globin promoter during erythroid differentiation of K562 erythroleukemia cells. Its function is as follows. Seems to enhance inorganic pyrophosphatase thus activating phosphogluomutase (PMG). Probably functions as a component of the calphoglin complex, which is involved in linking cellular metabolism (phosphate and glucose metabolism) with other core functions including protein synthesis and degradation, calcium signaling and cell growth. The chain is Calcium-binding and coiled-coil domain-containing protein 1 (CALCOCO1) from Bos taurus (Bovine).